The primary structure comprises 734 residues: Polyribonucleotide nucleotidyltransferase (734 aa).

Residues Asp-503 and Asp-509 each contribute to the Mg(2+) site. Positions 570–629 constitute a KH domain; sequence PKLSTIQVPVDAIGMIIGKGGETIRSITEETGAQINVDDDGTVTISSPNGESAAAAIETI. The S1 motif domain occupies 639-713; that stretch reads GTIYMGKVKD…GKIRYALSIK (75 aa).

This sequence belongs to the polyribonucleotide nucleotidyltransferase family. The cofactor is Mg(2+).

The protein localises to the cytoplasm. The enzyme catalyses RNA(n+1) + phosphate = RNA(n) + a ribonucleoside 5'-diphosphate. In terms of biological role, involved in mRNA degradation. Catalyzes the phosphorolysis of single-stranded polyribonucleotides processively in the 3'- to 5'-direction. The sequence is that of Polyribonucleotide nucleotidyltransferase from Chlorobium phaeobacteroides (strain BS1).